Here is a 250-residue protein sequence, read N- to C-terminus: Ubiquinone/menaquinone biosynthesis C-methyltransferase UbiE (250 aa).

Residues Thr-74, Asp-94, 122 to 123, and Ser-139 contribute to the S-adenosyl-L-methionine site; that span reads DA.

Belongs to the class I-like SAM-binding methyltransferase superfamily. MenG/UbiE family.

The catalysed reaction is a 2-demethylmenaquinol + S-adenosyl-L-methionine = a menaquinol + S-adenosyl-L-homocysteine + H(+). It catalyses the reaction a 2-methoxy-6-(all-trans-polyprenyl)benzene-1,4-diol + S-adenosyl-L-methionine = a 5-methoxy-2-methyl-3-(all-trans-polyprenyl)benzene-1,4-diol + S-adenosyl-L-homocysteine + H(+). It functions in the pathway quinol/quinone metabolism; menaquinone biosynthesis; menaquinol from 1,4-dihydroxy-2-naphthoate: step 2/2. Its pathway is cofactor biosynthesis; ubiquinone biosynthesis. In terms of biological role, methyltransferase required for the conversion of demethylmenaquinol (DMKH2) to menaquinol (MKH2) and the conversion of 2-polyprenyl-6-methoxy-1,4-benzoquinol (DDMQH2) to 2-polyprenyl-3-methyl-6-methoxy-1,4-benzoquinol (DMQH2). This chain is Ubiquinone/menaquinone biosynthesis C-methyltransferase UbiE, found in Dinoroseobacter shibae (strain DSM 16493 / NCIMB 14021 / DFL 12).